A 270-amino-acid chain; its full sequence is Acyl-[acyl-carrier-protein]--UDP-N-acetylglucosamine O-acyltransferase (270 aa).

This sequence belongs to the transferase hexapeptide repeat family. LpxA subfamily. As to quaternary structure, homotrimer.

The protein resides in the cytoplasm. It catalyses the reaction a (3R)-hydroxyacyl-[ACP] + UDP-N-acetyl-alpha-D-glucosamine = a UDP-3-O-[(3R)-3-hydroxyacyl]-N-acetyl-alpha-D-glucosamine + holo-[ACP]. It functions in the pathway glycolipid biosynthesis; lipid IV(A) biosynthesis; lipid IV(A) from (3R)-3-hydroxytetradecanoyl-[acyl-carrier-protein] and UDP-N-acetyl-alpha-D-glucosamine: step 1/6. Its function is as follows. Involved in the biosynthesis of lipid A, a phosphorylated glycolipid that anchors the lipopolysaccharide to the outer membrane of the cell. The polypeptide is Acyl-[acyl-carrier-protein]--UDP-N-acetylglucosamine O-acyltransferase (Sinorhizobium medicae (strain WSM419) (Ensifer medicae)).